Consider the following 875-residue polypeptide: GATOR2 complex protein MIOS (875 aa).

WD repeat units lie at residues 58–100 (SDTP…NSKF), 111–155 (KHAR…TPDI), 182–221 (GQND…QKMF), 223–261 (NTKA…KPVL), 265–306 (EQPK…TPIG), 320–360 (PCDN…SLAW), and 395–437 (RLRA…KQYT). Residues 735–781 (VSCNFCGKSISYSCSSVPHQGRGFSQYGVSGSPTKSKVTSCPGCRKP) form a C4-type zinc finger. Cys737 and Cys740 together coordinate Zn(2+). A phosphoserine mark is found at Ser759 and Ser766. Residues Cys775, Cys778, Cys788, Cys827, Cys830, His832, His835, His838, Cys849, Cys854, and Cys858 each contribute to the Zn(2+) site. The RING-type; atypical zinc-finger motif lies at 782–863 (LPRCALCLIN…CTCKCMQLDT (82 aa)).

The protein belongs to the WD repeat mio family. As to quaternary structure, component of the GATOR2 subcomplex, composed of MIOS, SEC13, SEH1L, WDR24 and WDR59. The GATOR2 complex interacts with CASTOR1 and CASTOR2; the interaction is negatively regulated by arginine. CASTOR1 and CASTOR2 convey leucine availability via direct interaction with MIOS. The GATOR2 complex interacts with SESN1, SESN2 and SESN3; the interaction is negatively regulated by amino acids. Interacts with SAR1A and SAR1B; the interaction is direct, disrupted by leucine and mediates the interaction of SAR1A or SAR1B with the GATOR2 complex to negatively regulate the TORC1 signaling upon leucine deprivation. Widely expressed. In brain, expressed in neurons and glia (oligodendrocytes and astrocytes), with more abundance in neurons.

The protein localises to the lysosome membrane. The GATOR2 complex is negatively regulated by the upstream amino acid sensors CASTOR1 and SESN2, which sequester the GATOR2 complex in absence of amino acids. In the presence of abundant amino acids, GATOR2 is released from CASTOR1 and SESN2 and activated. Its function is as follows. As a component of the GATOR2 complex, functions as an activator of the amino acid-sensing branch of the mTORC1 signaling pathway. The GATOR2 complex indirectly activates mTORC1 through the inhibition of the GATOR1 subcomplex. GATOR2 probably acts as an E3 ubiquitin-protein ligase toward GATOR1. In the presence of abundant amino acids, the GATOR2 complex mediates ubiquitination of the NPRL2 core component of the GATOR1 complex, leading to GATOR1 inactivation. In the absence of amino acids, GATOR2 is inhibited, activating the GATOR1 complex. Within the GATOR2 complex, MIOS is required to prevent autoubiquitination of WDR24, the catalytic subunit of the complex. The GATOR2 complex is required for brain myelination. This is GATOR2 complex protein MIOS from Mus musculus (Mouse).